Here is a 567-residue protein sequence, read N- to C-terminus: SRSF protein kinase 3 (567 aa).

The span at 1–16 (MSASTGGGGDSGGSGG) shows a compositional bias: gly residues. The interval 1–36 (MSASTGGGGDSGGSGGSSSSSQASCGPESSGSELAL) is disordered. Residues 17-32 (SSSSSQASCGPESSGS) show a composition bias toward low complexity. At Ser-50 the chain carries Phosphoserine. The Protein kinase domain maps to 79-565 (YHVVRKLGWG…AADCLQHPWL (487 aa)). ATP-binding positions include 85 to 93 (LGWGHFSTV) and Lys-108. Asp-212 functions as the Proton acceptor in the catalytic mechanism. Disordered stretches follow at residues 238–283 (QQAG…RLLE) and 298–351 (ATQA…SQTS). A compositionally biased stretch (polar residues) spans 248–258 (SIVSTAPQEVL). Over residues 264–279 (SKNKRKKMRRKRKQQK) the composition is skewed to basic residues. Over residues 327 to 348 (AGPSPASSSPAPGGGRSLSAGS) the composition is skewed to low complexity. Ser-330 carries the post-translational modification Phosphoserine.

Belongs to the protein kinase superfamily. CMGC Ser/Thr protein kinase family. As to expression, expressed in skeletal and heart muscle. Also expressed in the fetal brain.

It localises to the nucleus. It is found in the cytoplasm. It carries out the reaction L-seryl-[protein] + ATP = O-phospho-L-seryl-[protein] + ADP + H(+). The enzyme catalyses L-threonyl-[protein] + ATP = O-phospho-L-threonyl-[protein] + ADP + H(+). In terms of biological role, serine/arginine-rich protein-specific kinase which specifically phosphorylates its substrates at serine residues located in regions rich in arginine/serine dipeptides, known as RS domains. Phosphorylates the SR splicing factor SRSF1 and the lamin-B receptor (LBR) in vitro. Required for normal muscle development. This chain is SRSF protein kinase 3 (SRPK3), found in Homo sapiens (Human).